Reading from the N-terminus, the 907-residue chain is Catenin alpha-1 (907 aa).

Residues 870–879 (VKREKLDDGQ) are compositionally biased toward basic and acidic residues. The segment at 870-895 (VKREKLDDGQTNKVKRSSQKKHINPV) is disordered. Residues 882–892 (KVKRSSQKKHI) are compositionally biased toward basic residues.

The protein belongs to the vinculin/alpha-catenin family. In terms of assembly, interacts with ctnnb1, jupa and cdh2. Interacts with cdh1 during early stages of oogenesis, interaction is no longer present when oocyte develops into the unfertilized egg. In terms of tissue distribution, expressed in the skin (at protein level). Expressed in the ovary.

It localises to the cell junction. The protein resides in the adherens junction. The protein localises to the cytoplasm. Its subcellular location is the cytoskeleton. It is found in the cell membrane. It localises to the nucleus. Functionally, associates with the cytoplasmic domain of a variety of cadherins, forming catenin and cadherin complexes which are further linked to the actin filament network and is thereby involved in cell-cell adhesion. Required for embryonic development, via maintenance of adherens junctions that facilitate the maintenance of the epithelial barrier. In Danio rerio (Zebrafish), this protein is Catenin alpha-1.